We begin with the raw amino-acid sequence, 235 residues long: Large ribosomal subunit protein uL1 (235 aa).

Belongs to the universal ribosomal protein uL1 family. As to quaternary structure, part of the 50S ribosomal subunit.

In terms of biological role, binds directly to 23S rRNA. The L1 stalk is quite mobile in the ribosome, and is involved in E site tRNA release. Protein L1 is also a translational repressor protein, it controls the translation of the L11 operon by binding to its mRNA. This is Large ribosomal subunit protein uL1 from Prochlorococcus marinus (strain MIT 9312).